Here is a 203-residue protein sequence, read N- to C-terminus: Ribonuclease HII (203 aa).

The 187-residue stretch at 15 to 201 folds into the RNase H type-2 domain; it reads LLVAGLDEAG…VAQAPLRFPE (187 aa). A divalent metal cation-binding residues include D21, E22, and D111.

The protein belongs to the RNase HII family. Mn(2+) serves as cofactor. Mg(2+) is required as a cofactor.

It is found in the cytoplasm. The catalysed reaction is Endonucleolytic cleavage to 5'-phosphomonoester.. In terms of biological role, endonuclease that specifically degrades the RNA of RNA-DNA hybrids. This Thermus thermophilus (strain ATCC BAA-163 / DSM 7039 / HB27) protein is Ribonuclease HII.